Consider the following 138-residue polypeptide: Large ribosomal subunit protein uL16 (138 aa).

This sequence belongs to the universal ribosomal protein uL16 family. Part of the 50S ribosomal subunit.

Its function is as follows. Binds 23S rRNA and is also seen to make contacts with the A and possibly P site tRNAs. The polypeptide is Large ribosomal subunit protein uL16 (Gluconacetobacter diazotrophicus (strain ATCC 49037 / DSM 5601 / CCUG 37298 / CIP 103539 / LMG 7603 / PAl5)).